The chain runs to 410 residues: MSVQTSPSKQVTSGIQNLNMDSPAKKLDFGATDKENKPFDEDLAKLEAEIDAEHNANKKAAEAKKMAPTLKPEEANEPLLTENPQRFVLFPIKYHEIWQMYKKAEASFWTAEEIDLSKDLHDWNNRLNDDEKFFISHILAFFAASDGIVNENLVERFSGEVQIPEARCFYGFQIMMENIHSETYSLLIDTYIKEPSQRTYLFNAIDTIPCIRKKADWALRWITDKSSTFAQRLVAFAAVEGIFFSGAFASIFWLKKRGLMPGLTFSNELISRDEGLHTDFACLLFSHLNNRPSKQLIQEIIVDAVRIEQEFLTEALPCALLGMNADLMKQYIEFVADRLLVALGNEKIYRSTNPFDFMENISLGGKTNFFEKRVGDYQKAGVMNSTKKADADAEVAKNENGGDFTFDEDF.

Residues 1–20 (MSVQTSPSKQVTSGIQNLNM) are compositionally biased toward polar residues. Disordered regions lie at residues 1 to 43 (MSVQ…DEDL) and 55 to 78 (NANK…ANEP). 2 stretches are compositionally biased toward basic and acidic residues: residues 23 to 43 (PAKK…DEDL) and 55 to 65 (NANKKAAEAKK). Fe cation-binding residues include aspartate 146, glutamate 177, and histidine 180. Tyrosine 184 is an active-site residue. Fe cation is bound by residues glutamate 240, glutamate 274, and histidine 277.

The protein belongs to the ribonucleoside diphosphate reductase small chain family. Heterodimer of a large and a small subunit. It depends on Fe cation as a cofactor.

The enzyme catalyses a 2'-deoxyribonucleoside 5'-diphosphate + [thioredoxin]-disulfide + H2O = a ribonucleoside 5'-diphosphate + [thioredoxin]-dithiol. Provides the precursors necessary for DNA synthesis. Catalyzes the biosynthesis of deoxyribonucleotides from the corresponding ribonucleotides. In Neurospora crassa (strain ATCC 24698 / 74-OR23-1A / CBS 708.71 / DSM 1257 / FGSC 987), this protein is Ribonucleoside-diphosphate reductase small chain (rnr-2).